A 60-amino-acid polypeptide reads, in one-letter code: Ixodegrin YY-39 (60 aa).

Residues 1–21 (MNAALIAALLILGALTLDATA) form the signal peptide. Positions 49–51 (RGD) match the Cell attachment site motif.

This sequence belongs to the ixodegrin family. Post-translationally, contains 3 disulfide bonds. As to expression, expressed in salivary glands.

It is found in the secreted. Tick salivary platelet aggregation inhibitor that plays an important part in the anti-hemostatic strategy of ticks. Inhibits platelet aggregation induced by ADP, thrombin and thromboxane A2 (TXA2). Blocks platelet adhesion to soluble collagen (most probably through the binding to alpha-2/beta-1 integrin (ITGA2/ITGB1)) and binds to purified glycoprotein IIb/IIIa (ITGA2B/ITGB3) in a dose-dependent manner. In vivo, reduces thrombus weight effectively in a rat arteriovenous shunt model and inhibits thrombosis in a carrageenan-induced mouse tail thrombosis model. In Ixodes scapularis (Black-legged tick), this protein is Ixodegrin YY-39.